A 229-amino-acid polypeptide reads, in one-letter code: 5'-methylthioadenosine/S-adenosylhomocysteine nucleosidase (229 aa).

Glu-12 (proton acceptor) is an active-site residue. Substrate-binding positions include Gly-78, Met-152, and 173–174 (ME). Asp-197 serves as the catalytic Proton donor.

The protein belongs to the PNP/UDP phosphorylase family. MtnN subfamily.

The enzyme catalyses S-adenosyl-L-homocysteine + H2O = S-(5-deoxy-D-ribos-5-yl)-L-homocysteine + adenine. The catalysed reaction is S-methyl-5'-thioadenosine + H2O = 5-(methylsulfanyl)-D-ribose + adenine. It catalyses the reaction 5'-deoxyadenosine + H2O = 5-deoxy-D-ribose + adenine. Its pathway is amino-acid biosynthesis; L-methionine biosynthesis via salvage pathway; S-methyl-5-thio-alpha-D-ribose 1-phosphate from S-methyl-5'-thioadenosine (hydrolase route): step 1/2. Functionally, catalyzes the irreversible cleavage of the glycosidic bond in both 5'-methylthioadenosine (MTA) and S-adenosylhomocysteine (SAH/AdoHcy) to adenine and the corresponding thioribose, 5'-methylthioribose and S-ribosylhomocysteine, respectively. Also cleaves 5'-deoxyadenosine, a toxic by-product of radical S-adenosylmethionine (SAM) enzymes, into 5-deoxyribose and adenine. In Oceanobacillus iheyensis (strain DSM 14371 / CIP 107618 / JCM 11309 / KCTC 3954 / HTE831), this protein is 5'-methylthioadenosine/S-adenosylhomocysteine nucleosidase.